The chain runs to 408 residues: COP9 signalosome complex subunit 4 (408 aa).

In terms of domain architecture, PCI spans 194 to 374 (RIQDARRRFL…GIIYFESNTT (181 aa)).

This sequence belongs to the CSN4 family. Component of the COP9 signalosome (CSN) complex.

It is found in the cytoplasm. It localises to the nucleus. Functionally, component of the COP9 signalosome (CSN) complex that acts as an regulator of the ubiquitin (Ubl) conjugation pathway by mediating the deneddylation of the cullin subunit of SCF-type E3 ubiquitin-protein ligase complexes. The CSN complex seems to link protein degradation to sexual development. Required for fruit body formation. The protein is COP9 signalosome complex subunit 4 (csnD) of Emericella nidulans (strain FGSC A4 / ATCC 38163 / CBS 112.46 / NRRL 194 / M139) (Aspergillus nidulans).